The primary structure comprises 879 residues: DNA mismatch repair protein MutS (879 aa).

629–636 (GPNMAGKS) provides a ligand contact to ATP.

This sequence belongs to the DNA mismatch repair MutS family.

Functionally, this protein is involved in the repair of mismatches in DNA. It is possible that it carries out the mismatch recognition step. This protein has a weak ATPase activity. The chain is DNA mismatch repair protein MutS from Ruegeria sp. (strain TM1040) (Silicibacter sp.).